The chain runs to 332 residues: Glycerol-3-phosphate dehydrogenase [NAD(P)+] (332 aa).

Residues Trp-11, Arg-30, and Lys-108 each coordinate NADPH. Lys-108, Gly-137, and Ser-139 together coordinate sn-glycerol 3-phosphate. Residue Ala-141 participates in NADPH binding. Sn-glycerol 3-phosphate-binding residues include Lys-192, Asp-245, Ser-255, Arg-256, and Asn-257. The active-site Proton acceptor is Lys-192. Arg-256 serves as a coordination point for NADPH. NADPH contacts are provided by Val-280 and Glu-282.

This sequence belongs to the NAD-dependent glycerol-3-phosphate dehydrogenase family.

Its subcellular location is the cytoplasm. It catalyses the reaction sn-glycerol 3-phosphate + NAD(+) = dihydroxyacetone phosphate + NADH + H(+). The catalysed reaction is sn-glycerol 3-phosphate + NADP(+) = dihydroxyacetone phosphate + NADPH + H(+). It functions in the pathway membrane lipid metabolism; glycerophospholipid metabolism. Its function is as follows. Catalyzes the reduction of the glycolytic intermediate dihydroxyacetone phosphate (DHAP) to sn-glycerol 3-phosphate (G3P), the key precursor for phospholipid synthesis. The polypeptide is Glycerol-3-phosphate dehydrogenase [NAD(P)+] (Burkholderia lata (strain ATCC 17760 / DSM 23089 / LMG 22485 / NCIMB 9086 / R18194 / 383)).